The sequence spans 81 residues: Putative membrane protein insertion efficiency factor (81 aa).

Belongs to the UPF0161 family.

The protein localises to the cell inner membrane. Could be involved in insertion of integral membrane proteins into the membrane. The protein is Putative membrane protein insertion efficiency factor of Legionella pneumophila subsp. pneumophila (strain Philadelphia 1 / ATCC 33152 / DSM 7513).